The chain runs to 838 residues: DNA gyrase subunit A (838 aa).

The residue at position 2 (T2) is an N-acetylthreonine. A Topo IIA-type catalytic domain is found at L41–L510. The active-site O-(5'-phospho-DNA)-tyrosine intermediate is the Y129. D504, S506, E508, and D515 together coordinate Ca(2+). An EF-hand domain is found at D504 to V516. Residues E514 to N838 form a C-terminal domain CTD region. The GyrA-box signature appears at Q537–G543. A GyrA-box-1 motif is present at residues Q743–G749.

It belongs to the type II topoisomerase GyrA/ParC subunit family. Heterotetramer, composed of two GyrA and two GyrB chains. In the heterotetramer, GyrA contains the active site tyrosine that forms a transient covalent intermediate with DNA, while GyrB binds cofactors and catalyzes ATP hydrolysis. Ca(2+) is required as a cofactor.

The protein localises to the cytoplasm. It catalyses the reaction ATP-dependent breakage, passage and rejoining of double-stranded DNA.. With respect to regulation, DNA supercoiling inhibited by (fluoro)quinoline antibiotics such as sparfloxacin and levofloxacin, which usually act on GyrA. DNA supercoiling inhibited by the coumarin antibiotic novobiocin which acts on GyrB. Quinolones lead to gyrase-mediated dsDNA cleavage while preventing reclosure. DNA supercoiling activity inhibited by aminopyrazinamide and pyrrolamide derivatives, probably via effects on the GyrB subunit. DNA relaxation inhibited by ATP and its analogs. DNA supercoiling, relaxation, decatenation and quinolone-promoted DNA cleavage are inhibited by MfpA (50% inhibition occurs at 2 uM), inhibition of gyrase activities is enhanced in a concentration-dependent manner by MfpA. A type II topoisomerase that negatively supercoils closed circular double-stranded (ds) DNA in an ATP-dependent manner to maintain chromosomes in an underwound state, while in the absence of ATP it relaxes supercoiled dsDNA. Also catalyzes the interconversion of other topological isomers of dsDNA rings, including catenanes. Gyrase from M.tuberculosis has higher decatenation than supercoiling activity compared to E.coli; as M.tuberculosis only has 1 type II topoisomerase, gyrase has to fulfill the decatenation function of topoisomerase IV as well. At comparable concentrations M.tuberculosis gyrase cannot introduce as many negative supercoils into DNA as the E.coli enzyme, and its ATPase activity is lower, perhaps because it does not couple DNA wrapping and ATP binding as well as E.coli. Functionally, negative supercoiling favors strand separation, and DNA replication, transcription, recombination and repair, all of which involve strand separation. Type II topoisomerases break and join 2 DNA strands simultaneously in an ATP-dependent manner. This is DNA gyrase subunit A from Mycobacterium tuberculosis (strain ATCC 25618 / H37Rv).